Here is a 2615-residue protein sequence, read N- to C-terminus: Polycystin-1-like protein 1 (2615 aa).

Residues 1 to 1524 (MDVDEDQHAV…VSSISEFQSH (1524 aa)) lie on the Extracellular side of the membrane. The tract at residues 17–93 (IQANPELCVS…GTNSFSNPPP (77 aa)) is disordered. Asn-224, Asn-297, Asn-306, Asn-390, Asn-440, Asn-534, and Asn-619 each carry an N-linked (GlcNAc...) asparagine glycan. 2 consecutive PKD domains span residues 291–373 (SVSV…VQKR) and 375–456 (MANR…VREP). The region spanning 457-1349 (CQPPPVKNMG…GEEDYLHKRN (893 aa)) is the REJ domain. Positions 749 to 815 (SSKSDLPSNL…GEPMEEYSSL (67 aa)) are disordered. Residues 778 to 789 (ALSNLGSISAES) are compositionally biased toward polar residues. Residues 1364–1512 (RFTGLSENSQ…SVLRRKLNAT (149 aa)) form the GAIN-B domain. Asn-1458 is a glycosylation site (N-linked (GlcNAc...) asparagine). Cys-1468 and Cys-1494 are oxidised to a cystine. The segment at 1468–1512 (CVFWDKTEWRSEGPYPQPGSSPEKVNCSYHHLAPVSVLRRKLNAT) is GPS. N-linked (GlcNAc...) asparagine glycosylation occurs at Asn-1510. A helical transmembrane segment spans residues 1525-1545 (PHNLLPGIFSAFLLVLYGILV). The Cytoplasmic portion of the chain corresponds to 1546–1732 (SKSRYVDCHE…PPSRSYLHTQ (187 aa)). One can recognise a PLAT domain in the interval 1573-1690 (QLYAVVIDTG…LGGHVLREFF (118 aa)). Residues 1733-1753 (RLAVSFCLLCVYSCLTALVTV) traverse the membrane as a helical segment. The Extracellular segment spans residues 1754–1772 (RDHQQRPLDVGPTAITLEP). Residues 1773–1793 (FCMALLCTLLACPVAQLLSLL) form a helical membrane-spanning segment. The Cytoplasmic portion of the chain corresponds to 1794 to 1905 (FRCSKEARGD…ELGSQKSRVC (112 aa)). The disordered stretch occupies residues 1807–1840 (STQWPLRGVKTETPQGHDSSGRPDSRQPSPHPTS). The chain crosses the membrane as a helical span at residues 1906–1926 (LLWSSSVAWAISGSASLACGL). Residues 1927–1950 (GTGFLGYWFVPAQCMWWLYLLLLS) lie on the Extracellular side of the membrane. Residues 1951-1971 (LVCCAFITQPLMICLAALVFA) traverse the membrane as a helical segment. Over 1972 to 2057 (WKRKHDSKFF…ERLRRESIMQ (86 aa)) the chain is Cytoplasmic. A helical membrane pass occupies residues 2058–2078 (AALRDMTTHSIMLLLLLFIAY). Over 2079–2288 (GRFCPGEISL…IFYSDSALKY (210 aa)) the chain is Extracellular. Residues 2289–2309 (LLMLSELLFLVLNVIHLCFQL) traverse the membrane as a helical segment. At 2310–2332 (WGMTTKGILSYWRKPRHWLELSM) the chain is on the cytoplasmic side. Residues 2333 to 2353 (VGVAIAYYAASGHLTTLAVNI) form a helical membrane-spanning segment. The Extracellular segment spans residues 2354-2379 (TDQFHKGLYQRLVDIGLMVSWHQRAR). A helical membrane pass occupies residues 2380–2400 (CLQGILLFLWMLKYVHLLSSL). Over 2401-2405 (STMTP) the chain is Cytoplasmic. The helical transmembrane segment at 2406-2426 (FSAVTCFPLFRVLLVGALLLA) threads the bilayer. The Extracellular portion of the chain corresponds to 2427-2483 (AHYHSRWFLLFTGTLSHGTSAEAFPGLLLQFPGRSKKDSWHNCLKSDHGVMRCYYGT). Residues 2484–2504 (LFLLLATLGFRMLRATFLTVF) form a helical membrane-spanning segment. Residues 2505–2615 (QNRKSSHRKP…VSGPLAAESE (111 aa)) are Cytoplasmic-facing. Residues 2589–2615 (RAGDSPPVGSSEYQATGVSGPLAAESE) are disordered.

Belongs to the polycystin family. Heterodimer. Interacts with PKD2 to form a calcium channel. Interacts with PKD2L1; to form ciliary calcium channel. May interact with GNA12, GNAS, GNAI1 and GNAI2. In terms of tissue distribution, in testis, strong expression in Leydig cells, low level in seminal ducts, myoid cells and tunica vaginalis. Other tissues, including adrenal gland and heart myocardium, also show low expression. In embryo, highly expressed in the node.

The protein localises to the cell projection. Its subcellular location is the cilium membrane. Functionally, component of a calcium-permeant ion channel formed by PKD1L2 and PKD1L1 in primary cilia, where it controls cilium calcium concentration, without affecting cytoplasmic calcium concentration, and regulates sonic hedgehog/SHH signaling and GLI2 transcription. The PKD1L1:PKD2L1 channel complex is mechanosensitive only at high pressures and is highly temperature sensitive. Also involved in left/right axis specification downstream of nodal flow by forming a complex with PKD2 in cilia to facilitate flow detection in left/right patterning. May function as a G-protein-coupled receptor. This Mus musculus (Mouse) protein is Polycystin-1-like protein 1.